Reading from the N-terminus, the 247-residue chain is Probable chemoreceptor glutamine deamidase CheD (247 aa).

Positions 204-247 (KRPAAPQPARPRIELFGGRGTAPGAGSPSAGSPYAANLSRKQEA) are disordered. Low complexity predominate over residues 227 to 239 (GAGSPSAGSPYAA).

It belongs to the CheD family.

It carries out the reaction L-glutaminyl-[protein] + H2O = L-glutamyl-[protein] + NH4(+). Probably deamidates glutamine residues to glutamate on methyl-accepting chemotaxis receptors (MCPs), playing an important role in chemotaxis. The polypeptide is Probable chemoreceptor glutamine deamidase CheD (Burkholderia orbicola (strain AU 1054)).